The primary structure comprises 468 residues: Adenylyltransferase and sulfurtransferase MOCS3-1 (468 aa).

Residues Gly111, Asp132, 139-143 (NNLHR), Lys156, and 200-201 (DN) each bind ATP. 2 residues coordinate Zn(2+): Cys241 and Cys244. Residue Cys258 is the Glycyl thioester intermediate; for adenylyltransferase activity of the active site. The Zn(2+) site is built by Cys316 and Cys319. One can recognise a Rhodanese domain in the interval 371 to 466 (DGEPHLLLDV…WGRDVDPDFP (96 aa)). Residue Cys426 is the Cysteine persulfide intermediate; for sulfurtransferase activity of the active site.

The protein in the N-terminal section; belongs to the HesA/MoeB/ThiF family. UBA4 subfamily. Zn(2+) is required as a cofactor.

It localises to the cytoplasm. The enzyme catalyses [molybdopterin-synthase sulfur-carrier protein]-C-terminal Gly-Gly + ATP + H(+) = [molybdopterin-synthase sulfur-carrier protein]-C-terminal Gly-Gly-AMP + diphosphate. It carries out the reaction [molybdopterin-synthase sulfur-carrier protein]-C-terminal Gly-Gly-AMP + S-sulfanyl-L-cysteinyl-[cysteine desulfurase] + AH2 = [molybdopterin-synthase sulfur-carrier protein]-C-terminal-Gly-aminoethanethioate + L-cysteinyl-[cysteine desulfurase] + A + AMP + 2 H(+). It participates in tRNA modification; 5-methoxycarbonylmethyl-2-thiouridine-tRNA biosynthesis. It functions in the pathway cofactor biosynthesis; molybdopterin biosynthesis. In terms of biological role, plays a central role in 2-thiolation of mcm(5)S(2)U at tRNA wobble positions of cytosolic tRNA(Lys), tRNA(Glu) and tRNA(Gln). Also essential during biosynthesis of the molybdenum cofactor. Acts by mediating the C-terminal thiocarboxylation of sulfur carriers URM1 and MOCS2A. Its N-terminus first activates URM1 and MOCS2A as acyl-adenylates (-COAMP), then the persulfide sulfur on the catalytic cysteine is transferred to URM1 and MOCS2A to form thiocarboxylation (-COSH) of their C-terminus. The reaction probably involves hydrogen sulfide that is generated from the persulfide intermediate and that acts as a nucleophile towards URM1 and MOCS2A. Subsequently, a transient disulfide bond is formed. Does not use thiosulfate as sulfur donor; NFS1 probably acting as a sulfur donor for thiocarboxylation reactions. In Zea mays (Maize), this protein is Adenylyltransferase and sulfurtransferase MOCS3-1.